Reading from the N-terminus, the 1063-residue chain is Error-prone DNA polymerase (1063 aa).

This sequence belongs to the DNA polymerase type-C family. DnaE2 subfamily.

It is found in the cytoplasm. It carries out the reaction DNA(n) + a 2'-deoxyribonucleoside 5'-triphosphate = DNA(n+1) + diphosphate. Functionally, DNA polymerase involved in damage-induced mutagenesis and translesion synthesis (TLS). It is not the major replicative DNA polymerase. The chain is Error-prone DNA polymerase from Burkholderia mallei (strain ATCC 23344).